The sequence spans 203 residues: Na(+)-translocating NADH-quinone reductase subunit E (203 aa).

Helical transmembrane passes span 11–31 (SIFI…FLAV), 35–55 (ISTA…TVPL), 82–102 (FLGL…LEMF), 115–135 (GIFL…LFMV), 145–165 (MVYG…MAGV), and 181–201 (LGIT…FSGI).

This sequence belongs to the NqrDE/RnfAE family. Composed of six subunits; NqrA, NqrB, NqrC, NqrD, NqrE and NqrF.

Its subcellular location is the cell inner membrane. It carries out the reaction a ubiquinone + n Na(+)(in) + NADH + H(+) = a ubiquinol + n Na(+)(out) + NAD(+). NQR complex catalyzes the reduction of ubiquinone-1 to ubiquinol by two successive reactions, coupled with the transport of Na(+) ions from the cytoplasm to the periplasm. NqrA to NqrE are probably involved in the second step, the conversion of ubisemiquinone to ubiquinol. This is Na(+)-translocating NADH-quinone reductase subunit E from Dichelobacter nodosus (strain VCS1703A).